Consider the following 815-residue polypeptide: (-)-kolavenyl diphosphate synthase TPS14, chloroplastic (815 aa).

Residues 1 to 51 (MFMSSSSSSHARRPQLSSFSYLHPPLPFPGLSFFNTRDKRVNFDSTRIICI) constitute a chloroplast transit peptide. K247 is a binding site for substrate. Mg(2+) is bound by residues D379 and D381. A DXDD motif motif is present at residues 379 to 382 (DIDD). K465 contacts substrate.

It belongs to the terpene synthase family. Tpsc subfamily. The cofactor is Mg(2+).

It is found in the plastid. The protein resides in the chloroplast. The enzyme catalyses (2E,6E,10E)-geranylgeranyl diphosphate = (-)-kolavenyl diphosphate. Its activity is regulated as follows. Inhibited by high concentrations of magnesium. Functionally, diterpene synthase that catalyzes the formation of (-)-kolavenyl diphosphate from geranylgeranyl diphosphate (GGPP). This Tripterygium wilfordii (Thunder God vine) protein is (-)-kolavenyl diphosphate synthase TPS14, chloroplastic.